The sequence spans 275 residues: uncharacterized protein (275 aa).

This is an uncharacterized protein from Acanthamoeba polyphaga mimivirus (APMV).